We begin with the raw amino-acid sequence, 548 residues long: MISKINGKLFADMIIQGAQNLSNNADLVDSLNVYPVPDGDTGTNMNLTMTSGREEVENNLSKNIGELGKTFSKGLLMGARGNSGVILSQLFRGFCKNIESESEINSKLLAESFQAGVETAYKAVMKPVEGTILTVAKDAAQAAIEKANNTEDCIELMEYIIVKANESLENTPNLLAVLKEVGVVDSGGKGLLCVYEGFLKALKGEKVEAKVAKIDKDEFVHDEHDFHGVINTEDIIYGYCTEMMVRFGKNKKAFDEQEFRQDMSQFGDSLLVINDEEIVKVHVHTEYPGKVFNYGQQYGELIKLKVENMREQHREVIRKEQHTAKPKMETVETAIITISMGEGISEIFKSMGATHIISGGQTMNPSTEDIVKVIEQSKCKRAIILPNNKNILMASEQAASIVDAEAVVIPTKSIPQGISALFQYDVDATLEENKAQMADSVNNVKSGSLTYAVRDTKIDGVEIKKDAFMGLIEDKIVSSQSDQLTTVTELLNEMLAEDSEILTVIIGQDAEQAVTDNMINWIEEQYPDVEVEVHEGGQPIYQYFFSVE.

The region spanning 8–200 is the DhaL domain; the sequence is KLFADMIIQG…LLCVYEGFLK (193 aa).

This is an uncharacterized protein from Staphylococcus aureus (strain NCTC 8325 / PS 47).